A 522-amino-acid chain; its full sequence is Ribose import ATP-binding protein RbsA 1 (522 aa).

2 ABC transporter domains span residues 8-243 (LRIE…GRSI) and 249-496 (RERP…VSTN). 40-47 (GENGAGKS) serves as a coordination point for ATP. The interval 492–522 (AVSTNQYKPDKSDKPDASAGKTDQKEAPRGH) is disordered. Residues 499–522 (KPDKSDKPDASAGKTDQKEAPRGH) are compositionally biased toward basic and acidic residues.

Belongs to the ABC transporter superfamily. Ribose importer (TC 3.A.1.2.1) family. The complex is composed of an ATP-binding protein (RbsA), two transmembrane proteins (RbsC) and a solute-binding protein (RbsB).

The protein localises to the cell membrane. The catalysed reaction is D-ribose(out) + ATP + H2O = D-ribose(in) + ADP + phosphate + H(+). Part of the ABC transporter complex RbsABC involved in ribose import. Responsible for energy coupling to the transport system. In Streptomyces avermitilis (strain ATCC 31267 / DSM 46492 / JCM 5070 / NBRC 14893 / NCIMB 12804 / NRRL 8165 / MA-4680), this protein is Ribose import ATP-binding protein RbsA 1.